A 432-amino-acid chain; its full sequence is Mannose-6-phosphate isomerase 1 (432 aa).

Met-1 is modified (N-acetylmethionine). Residues Gln-124, His-126, Glu-151, and His-288 each contribute to the Zn(2+) site. Arg-307 is a catalytic residue.

The protein belongs to the mannose-6-phosphate isomerase type 1 family. The cofactor is Zn(2+). As to expression, constitutively expressed in both vegetative and reproductive organs under normal growth conditions (at protein level).

The enzyme catalyses D-mannose 6-phosphate = D-fructose 6-phosphate. It functions in the pathway nucleotide-sugar biosynthesis; GDP-alpha-D-mannose biosynthesis; alpha-D-mannose 1-phosphate from D-fructose 6-phosphate: step 1/2. Its activity is regulated as follows. Inhibited by EDTA, Zn(2+), Cd(2+), Co(2+), p-chloromercuribenzoate and L-ascorbic acid (AsA). In terms of biological role, phosphomannose isomerase involved in the synthesis of the GDP-mannose and dolichol-phosphate-mannose required for a number of critical mannosyl transfer reactions. Involved in the ascorbic acid (AsA) biosynthesis. Required during the endosperm development. The sequence is that of Mannose-6-phosphate isomerase 1 (PMI1) from Arabidopsis thaliana (Mouse-ear cress).